A 63-amino-acid polypeptide reads, in one-letter code: Large ribosomal subunit protein uL29 (63 aa).

Belongs to the universal ribosomal protein uL29 family.

The chain is Large ribosomal subunit protein uL29 from Colwellia psychrerythraea (strain 34H / ATCC BAA-681) (Vibrio psychroerythus).